We begin with the raw amino-acid sequence, 347 residues long: CRISPR-associated endonuclease Cas1 4 (347 aa).

The segment covering 1–21 has biased composition (basic and acidic residues); the sequence is MNIENEVHIENASESKREPKP. Residues 1–25 are disordered; the sequence is MNIENEVHIENASESKREPKPPEGL. Glu-176, His-241, and Glu-256 together coordinate Mn(2+).

This sequence belongs to the CRISPR-associated endonuclease Cas1 family. Homodimer, forms a heterotetramer with a Cas2 homodimer. Requires Mg(2+) as cofactor. The cofactor is Mn(2+).

Its function is as follows. CRISPR (clustered regularly interspaced short palindromic repeat), is an adaptive immune system that provides protection against mobile genetic elements (viruses, transposable elements and conjugative plasmids). CRISPR clusters contain spacers, sequences complementary to antecedent mobile elements, and target invading nucleic acids. CRISPR clusters are transcribed and processed into CRISPR RNA (crRNA). Acts as a dsDNA endonuclease. Involved in the integration of spacer DNA into the CRISPR cassette. The protein is CRISPR-associated endonuclease Cas1 4 of Methanospirillum hungatei JF-1 (strain ATCC 27890 / DSM 864 / NBRC 100397 / JF-1).